A 463-amino-acid polypeptide reads, in one-letter code: Rubisco accumulation factor 1, chloroplastic (463 aa).

The span at 1–18 (MLSLSHPHPHPAASTTAP) shows a compositional bias: low complexity. Residues 1–31 (MLSLSHPHPHPAASTTAPRHQRTAPVWHRRR) constitute a chloroplast transit peptide. The interval 1-84 (MLSLSHPHPH…PFHPPPSPLP (84 aa)) is disordered. A compositionally biased stretch (basic residues) spans 19-33 (RHQRTAPVWHRRRAS). Residues 43 to 53 (PGGGSTGGRGG) are compositionally biased toward gly residues. Residues 83-275 (LPPSLRNLDL…SGRARVELEL (193 aa)) form an N-terminal alpha-helix region. A coiled-coil region spans residues 240–294 (RQSREAIDVQDRVAELERALQVVETESGRARVELELERARRKAAGEEEVDEEGEE). The tract at residues 305–450 (VTVVRLRYGE…AEVVIVVRPP (146 aa)) is C-terminal beta sheet.

It belongs to the RAF family. As to quaternary structure, homotrimer. As to expression, expressed in bundle sheath.

Its subcellular location is the plastid. It localises to the chloroplast. Its function is as follows. Required for assembly or stability of RuBisCO. Acts at a postchaperonin step to fold and/or assemble the large subunit (LS) into RuBisCO. This Zea mays (Maize) protein is Rubisco accumulation factor 1, chloroplastic.